A 302-amino-acid polypeptide reads, in one-letter code: Elongation factor Ts (302 aa).

The involved in Mg(2+) ion dislocation from EF-Tu stretch occupies residues 80–83 (TDFV).

Belongs to the EF-Ts family.

It localises to the cytoplasm. Its function is as follows. Associates with the EF-Tu.GDP complex and induces the exchange of GDP to GTP. It remains bound to the aminoacyl-tRNA.EF-Tu.GTP complex up to the GTP hydrolysis stage on the ribosome. In Gluconobacter oxydans (strain 621H) (Gluconobacter suboxydans), this protein is Elongation factor Ts.